Here is a 475-residue protein sequence, read N- to C-terminus: Vasculin-like protein 1 (475 aa).

Ser49 and Ser76 each carry phosphoserine. Disordered stretches follow at residues 92–115 (NLSGWHGSSRGHDGMSQRAGGSTG) and 160–191 (PSLNPEAGKQNQPCRPIGTPSGVWENPPSAKQ). A Phosphoserine modification is found at Ser202. Disordered stretches follow at residues 237-271 (LVPKPAPPPSKPNAWKANRMEHKPGSLSSSREAAL) and 292-318 (PKESPSSTTPPIEISSSRLTKLTRRTT). Positions 294–311 (ESPSSTTPPIEISSSRLT) are enriched in low complexity. Thr300 is subject to Phosphothreonine. At Ser383 the chain carries Phosphoserine. Residues 456 to 475 (CEDSDTETSSSETSDDDAWK) form a disordered region.

Belongs to the vasculin family.

Its subcellular location is the nucleus. In terms of biological role, possible transcription factor. The protein is Vasculin-like protein 1 (Gpbp1l1) of Rattus norvegicus (Rat).